A 97-amino-acid polypeptide reads, in one-letter code: Na(+)/H(+) antiporter subunit F1 (97 aa).

The next 3 membrane-spanning stretches (helical) occupy residues 3 to 23, 35 to 55, and 60 to 80; these read HNVI…AMLI, VVAL…FSIL, and YMIV…AVFS.

Belongs to the CPA3 antiporters (TC 2.A.63) subunit F family. In terms of assembly, may form a heterooligomeric complex that consists of seven subunits: mnhA1, mnhB1, mnhC1, mnhD1, mnhE1, mnhF1 and mnhG1.

The protein localises to the cell membrane. Its function is as follows. Mnh complex is a Na(+)/H(+) antiporter involved in Na(+) excretion. This Staphylococcus aureus (strain Mu3 / ATCC 700698) protein is Na(+)/H(+) antiporter subunit F1 (mnhF1).